Consider the following 448-residue polypeptide: Homogentisate 1,2-dioxygenase (448 aa).

Residues His340, Glu346, and His377 each contribute to the Fe cation site.

Belongs to the homogentisate dioxygenase family. Requires Fe cation as cofactor.

The enzyme catalyses homogentisate + O2 = 4-maleylacetoacetate + H(+). It functions in the pathway amino-acid degradation; L-phenylalanine degradation; acetoacetate and fumarate from L-phenylalanine: step 4/6. This is Homogentisate 1,2-dioxygenase (hmgA) from Emericella nidulans (strain FGSC A4 / ATCC 38163 / CBS 112.46 / NRRL 194 / M139) (Aspergillus nidulans).